A 1024-amino-acid chain; its full sequence is Beta-galactosidase (1024 aa).

Substrate is bound by residues Asn103 and Asp202. Asp202 lines the Na(+) pocket. The Mg(2+) site is built by Glu417, His419, and Glu462. Residues Glu462 and 538–541 (EYAH) each bind substrate. The active-site Proton donor is Glu462. Glu538 serves as the catalytic Nucleophile. Asn598 contacts Mg(2+). Na(+) contacts are provided by Phe602 and Asn605. Residues Asn605 and Trp1000 each coordinate substrate.

It belongs to the glycosyl hydrolase 2 family. In terms of assembly, homotetramer. Mg(2+) is required as a cofactor. The cofactor is Na(+).

The catalysed reaction is Hydrolysis of terminal non-reducing beta-D-galactose residues in beta-D-galactosides.. The polypeptide is Beta-galactosidase (Shigella dysenteriae serotype 1 (strain Sd197)).